The chain runs to 258 residues: MLKTRIIPCLDVKDGRVVKGVQFLELRDAGDPVESAKAYDAAGADELCFLDITASHEARGTLLDVVSRTAEACFMPLTVGGGVRTVADVRTLLLAGADKVGINTAAVKNPDFVAEAAEKFGDQCIVVAIDAKRVSGPDEAARWEIFTHGGRNPTGIDAVEFARTVSERGAGELLVTSMDKDGTRSGYDIALTRAIADAVRVPVIASGGVGGLDDLVAGVRDGGASAVLAASIFHFGHHTVGEAKAHMAAAGLAMRLDP.

Catalysis depends on residues Asp11 and Asp130.

This sequence belongs to the HisA/HisF family. In terms of assembly, heterodimer of HisH and HisF.

The protein resides in the cytoplasm. The catalysed reaction is 5-[(5-phospho-1-deoxy-D-ribulos-1-ylimino)methylamino]-1-(5-phospho-beta-D-ribosyl)imidazole-4-carboxamide + L-glutamine = D-erythro-1-(imidazol-4-yl)glycerol 3-phosphate + 5-amino-1-(5-phospho-beta-D-ribosyl)imidazole-4-carboxamide + L-glutamate + H(+). The protein operates within amino-acid biosynthesis; L-histidine biosynthesis; L-histidine from 5-phospho-alpha-D-ribose 1-diphosphate: step 5/9. IGPS catalyzes the conversion of PRFAR and glutamine to IGP, AICAR and glutamate. The HisF subunit catalyzes the cyclization activity that produces IGP and AICAR from PRFAR using the ammonia provided by the HisH subunit. This Methylorubrum extorquens (strain PA1) (Methylobacterium extorquens) protein is Imidazole glycerol phosphate synthase subunit HisF.